Here is a 461-residue protein sequence, read N- to C-terminus: L-seryl-tRNA(Sec) selenium transferase (461 aa).

An N6-(pyridoxal phosphate)lysine modification is found at lysine 294.

The protein belongs to the SelA family. Pyridoxal 5'-phosphate is required as a cofactor.

Its subcellular location is the cytoplasm. The catalysed reaction is L-seryl-tRNA(Sec) + selenophosphate + H(+) = L-selenocysteinyl-tRNA(Sec) + phosphate. It participates in aminoacyl-tRNA biosynthesis; selenocysteinyl-tRNA(Sec) biosynthesis; selenocysteinyl-tRNA(Sec) from L-seryl-tRNA(Sec) (bacterial route): step 1/1. Converts seryl-tRNA(Sec) to selenocysteinyl-tRNA(Sec) required for selenoprotein biosynthesis. The sequence is that of L-seryl-tRNA(Sec) selenium transferase from Haemophilus influenzae (strain ATCC 51907 / DSM 11121 / KW20 / Rd).